The chain runs to 213 residues: Pyrrolidone-carboxylate peptidase (213 aa).

Catalysis depends on residues Glu78, Cys141, and His165.

The protein belongs to the peptidase C15 family. In terms of assembly, homotetramer.

The protein localises to the cytoplasm. It catalyses the reaction Release of an N-terminal pyroglutamyl group from a polypeptide, the second amino acid generally not being Pro.. Its function is as follows. Removes 5-oxoproline from various penultimate amino acid residues except L-proline. The sequence is that of Pyrrolidone-carboxylate peptidase from Staphylococcus carnosus (strain TM300).